We begin with the raw amino-acid sequence, 252 residues long: Body wall muscle protein HR-29 (252 aa).

Serine 2 is modified (N-acetylserine). Tandem repeats lie at residues 37-55 (RDWMTTPYSSTGIGRRDLS), 56-74 (QDWMTTPYTPAGVGRRDLS), and 75-93 (QDWMTTPYTSKGIGSRNLS). The 3 X 19 AA approximate tandem repeats stretch occupies residues 37 to 93 (RDWMTTPYSSTGIGRRDLSQDWMTTPYTPAGVGRRDLSQDWMTTPYTSKGIGSRNLS). Residues 138-249 (ISVEHEGKTT…KKTAVPVTVE (112 aa)) enclose the sHSP domain.

Belongs to the small heat shock protein (HSP20) family. In terms of assembly, exists as an oligomer.

It is found in the membrane. Its function is as follows. May be a component of myofibrils where it acts as a stabilizer. This is Body wall muscle protein HR-29 from Halocynthia roretzi (Sea squirt).